We begin with the raw amino-acid sequence, 129 residues long: Azurin-1 (129 aa).

Residues 1–129 (AECSVDIAGN…LMKGVLKLVD (129 aa)) enclose the Plastocyanin-like domain. An intrachain disulfide couples Cys-3 to Cys-26. Residues His-46, Cys-112, His-117, and Met-121 each coordinate Cu cation.

It localises to the periplasm. In terms of biological role, transfers electrons from cytochrome c551 to cytochrome oxidase. The polypeptide is Azurin-1 (Alcaligenes xylosoxydans xylosoxydans (Achromobacter xylosoxidans)).